A 470-amino-acid polypeptide reads, in one-letter code: Nucleoporin NUP49 (470 aa).

Residues 1–13 are compositionally biased toward polar residues; it reads MSLFGTNTTSQTP. Residues 1–92 are disordered; it reads MSLFGTNTTS…STTTTTSQPQ (92 aa). 12 GLFG repeats span residues 17–20, 45–48, 63–66, 79–82, 96–99, 111–114, 127–130, 142–145, 156–159, 168–171, 181–184, and 193–197; these read GLFG and GLFGQ. Low complexity predominate over residues 20-31; the sequence is GTTTSQSAQTGS. Over residues 32–74 the composition is skewed to polar residues; the sequence is LFGTATSQPQQTGGLFGSTATQTPSSQLQSTGLFGSTTATSQP. The segment covering 75–92 has biased composition (low complexity); sequence QQTGGLFGSTTTTTSQPQ. The interval 196-221 is disordered; it reads GQSTTQPQQQQNATPGLTMGQSTNTQ. A compositionally biased stretch (low complexity) spans 197-206; sequence QSTTQPQQQQ. The segment covering 207-221 has biased composition (polar residues); that stretch reads NATPGLTMGQSTNTQ. 2 coiled-coil regions span residues 239–270 and 375–401; these read TRFN…EAVD and FSKT…AHLT.

Belongs to the nucleoporin GLFG family. As to quaternary structure, component of the nuclear pore complex (NPC). NPC constitutes the exclusive means of nucleocytoplasmic transport. NPCs allow the passive diffusion of ions and small molecules and the active, nuclear transport receptor-mediated bidirectional transport of macromolecules such as proteins, RNAs, ribonucleoparticles (RNPs), and ribosomal subunits across the nuclear envelope. Due to its 8-fold rotational symmetry, all subunits are present with 8 copies or multiples thereof.

It is found in the nucleus. The protein resides in the nuclear pore complex. The protein localises to the nucleus membrane. In terms of biological role, functions as a component of the nuclear pore complex (NPC). NPC components, collectively referred to as nucleoporins (NUPs), can play the role of both NPC structural components and of docking or interaction partners for transiently associated nuclear transport factors. Active directional transport is assured by both, a Phe-Gly (FG) repeat affinity gradient for these transport factors across the NPC and a transport cofactor concentration gradient across the nuclear envelope (GSP1 and GSP2 GTPases associated predominantly with GTP in the nucleus, with GDP in the cytoplasm). NUP49 plays an important role in several nuclear transport pathways including poly(A)+ RNA, tRNA, and pre-ribosome transport. This Chaetomium thermophilum (strain DSM 1495 / CBS 144.50 / IMI 039719) (Thermochaetoides thermophila) protein is Nucleoporin NUP49 (NUP49).